The chain runs to 1705 residues: ALK tyrosine kinase receptor (1705 aa).

An N-terminal signal peptide occupies residues 1 to 21 (MIARILYFFLWSAAFLPELQC). The Extracellular segment spans residues 22-1035 (ASQRTADALT…SLSHLALGLS (1014 aa)). N-linked (GlcNAc...) asparagine glycans are attached at residues Asn40 and Asn48. Residues 54-76 (RIKRKTLSVDFAVPSLLRYYLAL) are heparin-binding region. Asn124, Asn259, Asn334, Asn434, Asn442, Asn458, Asn484, Asn578, Asn590, and Asn635 each carry an N-linked (GlcNAc...) asparagine glycan. One can recognise an MAM domain in the interval 486 to 644 (SYCSFGREDC…NFTLSMECFL (159 aa)). The cysteines at positions 694 and 707 are disulfide-linked. The N-linked (GlcNAc...) asparagine glycan is linked to Asn717. A disulfide bridge connects residues Cys788 and Cys799. N-linked (GlcNAc...) asparagine glycans are attached at residues Asn808 and Asn881. The segment at 842 to 892 (GGGRGYSSQSETPEEVMDRDPSIPGRNGKSGTAGGGGGWNDSAPVPQGGRP) is disordered. An intrachain disulfide couples Cys903 to Cys921. N-linked (GlcNAc...) asparagine glycosylation is present at Asn979. 2 cysteine pairs are disulfide-bonded: Cys980/Cys988 and Cys983/Cys997. Residues 980 to 1016 (CSHCESGDCHETSEGMVCYCDEELTLAPDGVSCINST) form an EGF-like region. Asn1014 carries an N-linked (GlcNAc...) asparagine glycan. A helical transmembrane segment spans residues 1036-1056 (VGTSALIAALLLAVSGVMIMY). The Cytoplasmic segment spans residues 1057–1705 (RRKHTELQSI…KMEGHNATVL (649 aa)). One can recognise a Protein kinase domain in the interval 1113-1389 (ISLTRGLGHG…IDYCLQDPDV (277 aa)). ATP-binding positions include 1119–1127 (LGHGAFGEV) and Lys1147. The active-site Proton acceptor is the Asp1246. Disordered regions lie at residues 1395-1499 (PVEY…GHVN), 1505-1524 (AHSS…WNPT), 1532-1557 (QQQK…GQEQ), 1588-1613 (QQQQ…PAPT), and 1646-1681 (GLPM…DSRP). Residues 1484-1493 (KPSSTTSNAQ) are compositionally biased toward polar residues. 2 stretches are compositionally biased toward low complexity: residues 1532–1544 (QQQK…AQRQ) and 1588–1602 (QQQQ…LCRP). The segment covering 1603 to 1613 (LLPPPPPPAPT) has biased composition (pro residues).

This sequence belongs to the protein kinase superfamily. Tyr protein kinase family. Insulin receptor subfamily. In terms of assembly, homodimer; homodimerizes upon binding to alkal ligands (alkal1, alkal2a or alkal2b). Highly expressed in the developing central nervous system: highly expressed in brain, with much lower expression in heart, caudal fin and testis.

Its subcellular location is the cell membrane. The catalysed reaction is L-tyrosyl-[protein] + ATP = O-phospho-L-tyrosyl-[protein] + ADP + H(+). Its activity is regulated as follows. Inhibited by ALK inhibitor TAE684. Functionally, receptor tyrosine kinase required for neurogenesis in the developing central nervous system. Following activation by alkal ligands (alkal1, alkal2a or alkal2b) at the cell surface, transduces an extracellular signal into an intracellular response. Ligand-binding to the extracellular domain induces tyrosine kinase activation, resulting in the activation of the mitogen-activated protein kinase (MAPK) pathway. Phosphorylates almost exclusively at the first tyrosine of the Y-x-x-x-Y-Y motif. The protein is ALK tyrosine kinase receptor of Danio rerio (Zebrafish).